The primary structure comprises 459 residues: Cysteine--tRNA ligase (459 aa).

A Zn(2+)-binding site is contributed by Cys31. The 'HIGH' region signature appears at Pro33–Asn43. Residues Cys216, His241, and Glu245 each coordinate Zn(2+). Residues Lys274–Ser278 carry the 'KMSKS' region motif. Lys277 provides a ligand contact to ATP.

The protein belongs to the class-I aminoacyl-tRNA synthetase family. As to quaternary structure, monomer. Zn(2+) is required as a cofactor.

It is found in the cytoplasm. It catalyses the reaction tRNA(Cys) + L-cysteine + ATP = L-cysteinyl-tRNA(Cys) + AMP + diphosphate. This is Cysteine--tRNA ligase from Rickettsia africae (strain ESF-5).